The primary structure comprises 253 residues: Glucosamine-6-phosphate deaminase (253 aa).

Residue D67 is the Proton acceptor; for enolization step of the active site. The For ring-opening step role is filled by N136. The active-site Proton acceptor; for ring-opening step is the H138. E143 functions as the For ring-opening step in the catalytic mechanism.

It belongs to the glucosamine/galactosamine-6-phosphate isomerase family. NagB subfamily.

It carries out the reaction alpha-D-glucosamine 6-phosphate + H2O = beta-D-fructose 6-phosphate + NH4(+). It participates in amino-sugar metabolism; N-acetylneuraminate degradation; D-fructose 6-phosphate from N-acetylneuraminate: step 5/5. Catalyzes the reversible isomerization-deamination of glucosamine 6-phosphate (GlcN6P) to form fructose 6-phosphate (Fru6P) and ammonium ion. This is Glucosamine-6-phosphate deaminase from Thermoanaerobacter pseudethanolicus (strain ATCC 33223 / 39E) (Clostridium thermohydrosulfuricum).